Here is a 154-residue protein sequence, read N- to C-terminus: Large ribosomal subunit protein uL15 (154 aa).

A disordered region spans residues 1 to 57 (MRFQDLHPQAGSRRRKRRIGRGIAAGQGASGGFGMRGQKSRSGRPTRPGFEGGQNPL). The segment covering 23-35 (IAAGQGASGGFGM) has biased composition (gly residues).

This sequence belongs to the universal ribosomal protein uL15 family. As to quaternary structure, part of the 50S ribosomal subunit.

In terms of biological role, binds to the 23S rRNA. This is Large ribosomal subunit protein uL15 from Thermosynechococcus vestitus (strain NIES-2133 / IAM M-273 / BP-1).